The following is a 284-amino-acid chain: Bifunctional protein FolD (284 aa).

NADP(+) is bound by residues 165–167, serine 190, and valine 231; that span reads GRS.

It belongs to the tetrahydrofolate dehydrogenase/cyclohydrolase family. Homodimer.

It catalyses the reaction (6R)-5,10-methylene-5,6,7,8-tetrahydrofolate + NADP(+) = (6R)-5,10-methenyltetrahydrofolate + NADPH. The catalysed reaction is (6R)-5,10-methenyltetrahydrofolate + H2O = (6R)-10-formyltetrahydrofolate + H(+). It functions in the pathway one-carbon metabolism; tetrahydrofolate interconversion. Catalyzes the oxidation of 5,10-methylenetetrahydrofolate to 5,10-methenyltetrahydrofolate and then the hydrolysis of 5,10-methenyltetrahydrofolate to 10-formyltetrahydrofolate. The protein is Bifunctional protein FolD of Brevibacillus brevis (strain 47 / JCM 6285 / NBRC 100599).